We begin with the raw amino-acid sequence, 274 residues long: NH(3)-dependent NAD(+) synthetase (274 aa).

46–53 (GISGGQDS) is an ATP binding site. Residue aspartate 52 coordinates Mg(2+). Arginine 140 contributes to the deamido-NAD(+) binding site. An ATP-binding site is contributed by threonine 160. Glutamate 165 serves as a coordination point for Mg(2+). Deamido-NAD(+) contacts are provided by lysine 173 and aspartate 180. Positions 189 and 211 each coordinate ATP. 260–261 (HK) is a deamido-NAD(+) binding site.

It belongs to the NAD synthetase family. In terms of assembly, homodimer.

It carries out the reaction deamido-NAD(+) + NH4(+) + ATP = AMP + diphosphate + NAD(+) + H(+). It functions in the pathway cofactor biosynthesis; NAD(+) biosynthesis; NAD(+) from deamido-NAD(+) (ammonia route): step 1/1. In terms of biological role, catalyzes the ATP-dependent amidation of deamido-NAD to form NAD. Uses ammonia as a nitrogen source. This is NH(3)-dependent NAD(+) synthetase from Streptococcus mutans serotype c (strain ATCC 700610 / UA159).